The following is a 688-amino-acid chain: PTS system glucoside-specific EIICBA component (688 aa).

Residues 3–427 form the PTS EIIC type-1 domain; sequence KKLFGQLQRI…FKLKTPGRED (425 aa). A run of 10 helical transmembrane segments spans residues 12–32, 81–101, 137–157, 182–202, 223–243, 284–304, 315–335, 340–360, 364–384, and 395–415; these read IGKA…LLAF, LGLA…YLIM, LVLG…MGAL, FVPI…SFAW, LTTF…LHHI, AFTT…AFAI, VVGG…ITEP, FLFV…TSFL, LLGV…ILYG, and LVIP…DFAI. The PTS EIIB type-1 domain occupies 438-519; sequence AKLPFDVLDA…AKIMSGEITK (82 aa). Cys460 acts as the Phosphocysteine intermediate; for EIIB activity in catalysis. Residues 560-664 form the PTS EIIA type-1 domain; it reads DQVFAGKMMG…SIVTPMIITN (105 aa). The Tele-phosphohistidine intermediate; for EIIA activity role is filled by His612.

It is found in the cell membrane. The phosphoenolpyruvate-dependent sugar phosphotransferase system (sugar PTS), a major carbohydrate active -transport system, catalyzes the phosphorylation of incoming sugar substrates concomitantly with their translocation across the cell membrane. This system is involved in alpha- and beta-glucoside transport. The sequence is that of PTS system glucoside-specific EIICBA component (glcB) from Staphylococcus aureus (strain bovine RF122 / ET3-1).